We begin with the raw amino-acid sequence, 291 residues long: Secreted effector protein PipB (291 aa).

2 consecutive Pentapeptide repeat domains span residues 154 to 193 (LNLR…NLVG) and 199 to 238 (ANLH…ILFG).

Its subcellular location is the secreted. It localises to the host membrane. In terms of biological role, effector proteins function to alter host cell physiology and promote bacterial survival in host tissues. Does not appear to be required for the formation or the maintenance of either Salmonella-containing vacuole (SCV) or the Salmonella-induced filaments (Sifs). Not required for intracellular replication in phagocytic cells. The polypeptide is Secreted effector protein PipB (pipB) (Salmonella typhimurium (strain LT2 / SGSC1412 / ATCC 700720)).